Reading from the N-terminus, the 248-residue chain is Homeotic protein ultrabithorax (248 aa).

A compositionally biased stretch (gly residues) spans 116–125 (GTGGGGGGSA). The tract at residues 116-191 (GTGGGGGGSA…GSAGVVGGAG (76 aa)) is disordered. A compositionally biased stretch (low complexity) spans 126–139 (GSANGANNTANGQN). 2 stretches are compositionally biased toward gly residues: residues 140 to 152 (TSGGGGAGGGGGM) and 182 to 191 (GSAGVVGGAG). The Antp-type hexapeptide signature appears at 241–246 (FYPWMA).

The protein belongs to the Antp homeobox family.

Its subcellular location is the nucleus. Sequence-specific transcription factor which is part of a developmental regulatory system that provides cells with specific positional identities on the anterior-posterior axis. Binds the consensus region 5'-TTAAT[GT][GA]-3'. This is Homeotic protein ultrabithorax (Ubx) from Musca domestica (House fly).